We begin with the raw amino-acid sequence, 374 residues long: MVVGIHRPSKLVINAEAIRNNVKNEISRLDGHSELFAVVKANGYGHGIVETAQFTKQAGATGFCVAILDEALALRDAGLTETILVLGITDVKYAKLAAENDISLTVGDQAWLDEATQILNQKPLKVHLGIDTGMGRIGFQDGASFKKAADYLEQSQQFNFEGVFTHFATADEKDTTYFNLQVERFNHFISQLTRRPRYVHVSNTATSLWHAACNGNMIRFGVGIYGMNPSGKTLESPFDLQPAMSLESELSFSKLVQKGRSISYGATYTAEEDEWIGTIPIGYADGYERRLQGFHVLIDGQFCEIVGRICMDQMMVRLPKSYPVGTKVILAGKSGEKSITMTDIAEYAGTINYEITCGFTQRLPRIYTENGVVN.

The active-site Proton acceptor; specific for D-alanine is Lys-40. Position 40 is an N6-(pyridoxal phosphate)lysine (Lys-40). Arg-136 provides a ligand contact to substrate. Tyr-264 acts as the Proton acceptor; specific for L-alanine in catalysis. Met-311 contacts substrate.

The protein belongs to the alanine racemase family. The cofactor is pyridoxal 5'-phosphate.

It catalyses the reaction L-alanine = D-alanine. Its pathway is amino-acid biosynthesis; D-alanine biosynthesis; D-alanine from L-alanine: step 1/1. Catalyzes the interconversion of L-alanine and D-alanine. May also act on other amino acids. The chain is Alanine racemase (alr) from Pediococcus pentosaceus (strain ATCC 25745 / CCUG 21536 / LMG 10740 / 183-1w).